We begin with the raw amino-acid sequence, 784 residues long: Rabenosyn-5 (784 aa).

Position 2 is an N-acetylalanine (Ala2). Ser3 is modified (phosphoserine). The C2H2-type zinc-finger motif lies at Phe14–His37. Positions Arg100 to Glu263 are necessary for the correct targeting to endosomes. The segment at Asp157 to Leu260 adopts an FYVE-type zinc-finger fold. The Zn(2+) site is built by Cys163, Cys166, Cys179, Cys182, Cys187, and Cys190. The span at Lys207 to His224 shows a compositional bias: polar residues. Positions Lys207–Leu241 are disordered. Ser215, Ser219, Ser226, and Ser230 each carry phosphoserine. A compositionally biased stretch (low complexity) spans Arg228–Val240. 2 residues coordinate Zn(2+): Cys252 and Cys255. Residues Gln264–Gln500 are necessary for interaction with RAB4A. The necessary for interaction with EHD1 stretch occupies residues Gln264 to Asp784. 2 coiled-coil regions span residues Thr378–Arg414 and Gln472–Glu531. The span at Lys390–Glu400 shows a compositional bias: basic and acidic residues. The disordered stretch occupies residues Lys390–Ser429. The UIM domain occupies Tyr496–Glu515. Residues Asp574–Glu732 form a disordered region. Residues Pro579 to Arg598 show a composition bias toward polar residues. The necessary for interaction with RAB5A stretch occupies residues Pro627 to Asp784. Over residues Pro663–Ala673 the composition is skewed to acidic residues. Ser684 bears the Phosphoserine mark. Residues Met722–Glu732 show a composition bias toward acidic residues.

In terms of assembly, interacts with EHD1, RAB4A, RAB5A, RAB14, RAB22A, RAB24 and VPS45. Binds simultaneously to RAB4A and RAB5A in vitro. Interacts with RAB4A and RAB5A that has been activated by GTP binding.

The protein localises to the cell membrane. It localises to the early endosome membrane. In terms of biological role, rab4/Rab5 effector protein acting in early endocytic membrane fusion and membrane trafficking of recycling endosomes. Required for endosome fusion either homotypically or with clathrin coated vesicles. Plays a role in the lysosomal trafficking of CTSD/cathepsin D from the Golgi to lysosomes. Also promotes the recycling of transferrin directly from early endosomes to the plasma membrane. Binds phospholipid vesicles containing phosphatidylinositol 3-phosphate (PtdInsP3). Plays a role in the recycling of transferrin receptor to the plasma membrane. This is Rabenosyn-5 from Homo sapiens (Human).